The following is a 467-amino-acid chain: 3-isopropylmalate dehydratase large subunit (467 aa).

[4Fe-4S] cluster-binding residues include cysteine 348, cysteine 409, and cysteine 412. The segment at 423 to 449 (NERSISTSNRNFEGRQGKGSRTHLASP) is disordered.

Belongs to the aconitase/IPM isomerase family. LeuC type 1 subfamily. As to quaternary structure, heterodimer of LeuC and LeuD. The cofactor is [4Fe-4S] cluster.

The enzyme catalyses (2R,3S)-3-isopropylmalate = (2S)-2-isopropylmalate. Its pathway is amino-acid biosynthesis; L-leucine biosynthesis; L-leucine from 3-methyl-2-oxobutanoate: step 2/4. Functionally, catalyzes the isomerization between 2-isopropylmalate and 3-isopropylmalate, via the formation of 2-isopropylmaleate. The sequence is that of 3-isopropylmalate dehydratase large subunit from Bifidobacterium longum subsp. infantis (strain ATCC 15697 / DSM 20088 / JCM 1222 / NCTC 11817 / S12).